A 131-amino-acid polypeptide reads, in one-letter code: Pancreatic polypeptide prohormone (131 aa).

A signal peptide spans 1–29; sequence MAAAHRCLFLLLLSTCVALLLQPPLGALG. Tyr65 bears the Tyrosine amide mark.

The protein belongs to the NPY family.

The protein resides in the secreted. In terms of biological role, hormone secreted by pancreatic cells that acts as a regulator of pancreatic and gastrointestinal functions probably by signaling through the G protein-coupled receptor NPY4R2. The protein is Pancreatic polypeptide prohormone (PPY) of Bos taurus (Bovine).